The sequence spans 219 residues: Cytochrome b6 (219 aa).

A helical transmembrane segment spans residues 32-52 (IFYCFGGIVLTAFIFQGASGF). Position 35 (Cys-35) interacts with heme c. His-86 and His-100 together coordinate heme b. Transmembrane regions (helical) follow at residues 90-110 (SGCM…TGGF), 116-136 (LTWI…VTGY), and 190-210 (IHTF…FSLL). 2 residues coordinate heme b: His-191 and His-206.

This sequence belongs to the cytochrome b family. PetB subfamily. The 4 large subunits of the cytochrome b6-f complex are cytochrome b6, subunit IV (17 kDa polypeptide, PetD), cytochrome f and the Rieske protein, while the 4 small subunits are PetG, PetL, PetM and PetN. The complex functions as a dimer. Heme b is required as a cofactor. Requires heme c as cofactor.

The protein resides in the plastid. The protein localises to the chloroplast thylakoid membrane. In terms of biological role, component of the cytochrome b6-f complex, which mediates electron transfer between photosystem II (PSII) and photosystem I (PSI), cyclic electron flow around PSI, and state transitions. This chain is Cytochrome b6, found in Heterocapsa triquetra (Dinoflagellate).